An 855-amino-acid polypeptide reads, in one-letter code: DNA mismatch repair protein MutS (855 aa).

ATP is bound at residue 618–625 (GPNMGGKS).

This sequence belongs to the DNA mismatch repair MutS family.

Functionally, this protein is involved in the repair of mismatches in DNA. It is possible that it carries out the mismatch recognition step. This protein has a weak ATPase activity. In Shewanella loihica (strain ATCC BAA-1088 / PV-4), this protein is DNA mismatch repair protein MutS.